A 409-amino-acid polypeptide reads, in one-letter code: Histone deacetylase 7 (409 aa).

The tract at residues 11 to 324 is histone deacetylase; that stretch reads RVSYFYEPMI…WCYETAIAVG (314 aa). The active-site Proton donor/acceptor is H148. Residue D267 coordinates Zn(2+). The interval 383–409 is disordered; it reads PFQDTPSSSQATEAAEVDMEKRNDPRI. Over residues 384–394 the composition is skewed to polar residues; the sequence is FQDTPSSSQAT. Positions 400 to 409 are enriched in basic and acidic residues; sequence DMEKRNDPRI.

This sequence belongs to the histone deacetylase family. HD type 1 subfamily. It depends on Zn(2+) as a cofactor. Low expression in flowers.

It is found in the nucleus. The catalysed reaction is N(6)-acetyl-L-lysyl-[histone] + H2O = L-lysyl-[histone] + acetate. Functionally, responsible for the deacetylation of lysine residues on the N-terminal part of the core histones (H2A, H2B, H3 and H4). Histone deacetylation gives a tag for epigenetic repression and plays an important role in transcriptional regulation, cell cycle progression and developmental events. May be involved in flowering induction. Histone deacetylases act via the formation of large multiprotein complexes. The sequence is that of Histone deacetylase 7 (HDA7) from Arabidopsis thaliana (Mouse-ear cress).